Consider the following 181-residue polypeptide: Oligoribonuclease (181 aa).

Residues 8-171 (LVWIDMEMTG…DDIRESIAEL (164 aa)) form the Exonuclease domain. The active site involves tyrosine 129.

This sequence belongs to the oligoribonuclease family.

Its subcellular location is the cytoplasm. 3'-to-5' exoribonuclease specific for small oligoribonucleotides. The protein is Oligoribonuclease of Pseudoalteromonas atlantica (strain T6c / ATCC BAA-1087).